A 118-amino-acid polypeptide reads, in one-letter code: Large ribosomal subunit protein bL19 (118 aa).

This sequence belongs to the bacterial ribosomal protein bL19 family.

In terms of biological role, this protein is located at the 30S-50S ribosomal subunit interface and may play a role in the structure and function of the aminoacyl-tRNA binding site. The protein is Large ribosomal subunit protein bL19 of Coprothermobacter proteolyticus (strain ATCC 35245 / DSM 5265 / OCM 4 / BT).